Here is a 515-residue protein sequence, read N- to C-terminus: Protein DETOXIFICATION 32 (515 aa).

Residues 1 to 26 (METLNVDHEDTISSEQEHRAHTKSDT) show a composition bias toward basic and acidic residues. The interval 1-30 (METLNVDHEDTISSEQEHRAHTKSDTDMPP) is disordered. Transmembrane regions (helical) follow at residues 48-68 (LWWL…LGAV), 90-110 (VISG…ATLC), 131-151 (IILN…TPLL), 167-187 (FSLW…TAKF), 194-214 (VIAM…LSWL), 225-245 (GGAV…IVYI), 276-296 (AVMV…AGYL), 303-323 (VAAL…AFGF), 347-367 (LIVA…TLIV), 392-412 (LLAL…VAVG), 418-438 (IVAY…GLVL), and 448-468 (GIWT…LFII). Positions 488 to 497 (GDQSNKREEI) are enriched in basic and acidic residues. The disordered stretch occupies residues 488–515 (GDQSNKREEIDLCEEDENNSNGENNHRK). Residues 506-515 (NSNGENNHRK) are compositionally biased toward low complexity.

This sequence belongs to the multi antimicrobial extrusion (MATE) (TC 2.A.66.1) family.

It localises to the membrane. This Arabidopsis thaliana (Mouse-ear cress) protein is Protein DETOXIFICATION 32.